The primary structure comprises 219 residues: Large ribosomal subunit protein uL4 (219 aa).

The disordered stretch occupies residues 43-100 (AAKRQGTHSTKTRGEVSGGGKKPYRQKGTGRARQGSTRAPQFTGGGTVHGPQPRDYSQ).

This sequence belongs to the universal ribosomal protein uL4 family. In terms of assembly, part of the 50S ribosomal subunit.

Its function is as follows. One of the primary rRNA binding proteins, this protein initially binds near the 5'-end of the 23S rRNA. It is important during the early stages of 50S assembly. It makes multiple contacts with different domains of the 23S rRNA in the assembled 50S subunit and ribosome. Forms part of the polypeptide exit tunnel. The polypeptide is Large ribosomal subunit protein uL4 (Mycobacterium sp. (strain JLS)).